We begin with the raw amino-acid sequence, 20 residues long: Thylakoid lumenal 18.4 kDa protein (20 aa).

It is found in the plastid. The protein resides in the chloroplast thylakoid lumen. The sequence is that of Thylakoid lumenal 18.4 kDa protein from Spinacia oleracea (Spinach).